Consider the following 1770-residue polypeptide: Transposon Ty2-F Gag-Pol polyprotein (1770 aa).

Polar residues-rich tracts occupy residues 1–11 (MESQQLHQNPH), 19–39 (ASVT…SASN), and 49–60 (KVNSQQETTPGT). 2 disordered regions span residues 1 to 86 (MESQ…GQYQ) and 359 to 453 (QHSE…LPDH). The segment at 295-397 (ENNINVSDRL…SSKPRAAKAH (103 aa)) is RNA-binding. Residues 369–381 (TSPNTTNTKVTTR) are compositionally biased toward low complexity. Composition is skewed to polar residues over residues 399-408 (IATSSKFSRV) and 415-435 (ESTV…GQQQ). D457 acts as the For protease activity; shared with dimeric partner in catalysis. An integrase-type zinc finger-like region spans residues 579 to 636 (NVNKSKSVNKYPYPLIHRMLGHANFRSIQKSLKKNAVTYLKESDIEWSNASTYQCPDC). The Integrase catalytic domain occupies 656–831 (ESYEPFQYLH…AGLDITTILP (176 aa)). The Mg(2+) site is built by D667 and D732. 4 disordered regions span residues 1004–1034 (MGGT…STNE), 1059–1135 (TEEP…KSSK), 1146–1165 (LPLP…VSKD), and 1170–1205 (HSRQ…TEIE). 2 stretches are compositionally biased toward polar residues: residues 1009-1034 (ESDT…STNE) and 1065-1082 (QRNS…STPS). A compositionally biased stretch (basic and acidic residues) spans 1151 to 1165 (LTHKSPTDTSDVSKD). The short motif at 1193-1227 (KKRSLEDNETEIEVSRDTWNNKNMRSLEPPRSKKR) is the Bipartite nuclear localization signal element. One can recognise a Reverse transcriptase Ty1/copia-type domain in the interval 1353-1491 (NDYYITQLDI…DILGLEIKYQ (139 aa)). Mg(2+) is bound by residues D1361, D1442, D1443, D1625, E1667, and D1700. One can recognise an RNase H Ty1/copia-type domain in the interval 1625–1767 (DASYGNQPYY…IKTFKLLTNK (143 aa)).

The capsid protein forms a homotrimer, from which the VLPs are assembled. The protease is a homodimer, whose active site consists of two apposed aspartic acid residues. Initially, virus-like particles (VLPs) are composed of the structural unprocessed proteins Gag and Gag-Pol, and also contain the host initiator methionine tRNA (tRNA(i)-Met) which serves as a primer for minus-strand DNA synthesis, and a dimer of genomic Ty RNA. Processing of the polyproteins occurs within the particle and proceeds by an ordered pathway, called maturation. First, the protease (PR) is released by autocatalytic cleavage of the Gag-Pol polyprotein, and this cleavage is a prerequisite for subsequent processing at the remaining sites to release the mature structural and catalytic proteins. Maturation takes place prior to the RT reaction and is required to produce transposition-competent VLPs.

Its subcellular location is the cytoplasm. It is found in the nucleus. It catalyses the reaction DNA(n) + a 2'-deoxyribonucleoside 5'-triphosphate = DNA(n+1) + diphosphate. It carries out the reaction Endonucleolytic cleavage to 5'-phosphomonoester.. Its function is as follows. Capsid protein (CA) is the structural component of the virus-like particle (VLP), forming the shell that encapsulates the retrotransposons dimeric RNA genome. The particles are assembled from trimer-clustered units and there are holes in the capsid shells that allow for the diffusion of macromolecules. CA also has nucleocapsid-like chaperone activity, promoting primer tRNA(i)-Met annealing to the multipartite primer-binding site (PBS), dimerization of Ty2 RNA and initiation of reverse transcription. In terms of biological role, the aspartyl protease (PR) mediates the proteolytic cleavages of the Gag and Gag-Pol polyproteins after assembly of the VLP. Functionally, reverse transcriptase/ribonuclease H (RT) is a multifunctional enzyme that catalyzes the conversion of the retro-elements RNA genome into dsDNA within the VLP. The enzyme displays a DNA polymerase activity that can copy either DNA or RNA templates, and a ribonuclease H (RNase H) activity that cleaves the RNA strand of RNA-DNA heteroduplexes during plus-strand synthesis and hydrolyzes RNA primers. The conversion leads to a linear dsDNA copy of the retrotransposon that includes long terminal repeats (LTRs) at both ends. Integrase (IN) targets the VLP to the nucleus, where a subparticle preintegration complex (PIC) containing at least integrase and the newly synthesized dsDNA copy of the retrotransposon must transit the nuclear membrane. Once in the nucleus, integrase performs the integration of the dsDNA into the host genome. The sequence is that of Transposon Ty2-F Gag-Pol polyprotein (TY2B-F) from Saccharomyces cerevisiae (strain ATCC 204508 / S288c) (Baker's yeast).